A 214-amino-acid chain; its full sequence is RING-H2 finger protein ATL67 (214 aa).

Residues 33-53 (LGFGYSIAIALGFLVLLSTVL) form a helical membrane-spanning segment. An RING-type; atypical zinc finger spans residues 138 to 180 (CSICLCEYKEAEMLRMMPECKHYFHLCCLDAWLKLNGSCPVCR).

This sequence belongs to the RING-type zinc finger family. ATL subfamily.

It is found in the membrane. It carries out the reaction S-ubiquitinyl-[E2 ubiquitin-conjugating enzyme]-L-cysteine + [acceptor protein]-L-lysine = [E2 ubiquitin-conjugating enzyme]-L-cysteine + N(6)-ubiquitinyl-[acceptor protein]-L-lysine.. The protein operates within protein modification; protein ubiquitination. The sequence is that of RING-H2 finger protein ATL67 (ATL67) from Arabidopsis thaliana (Mouse-ear cress).